We begin with the raw amino-acid sequence, 56 residues long: Large ribosomal subunit protein bL32 (56 aa).

The tract at residues 1–40 (MAVQQNKKSRSKRGMRRSHDSLGTAQLSVDATSGELHRRH) is disordered. The segment covering 7 to 16 (KKSRSKRGMR) has biased composition (basic residues). The span at 21–31 (SLGTAQLSVDA) shows a compositional bias: polar residues.

It belongs to the bacterial ribosomal protein bL32 family.

The sequence is that of Large ribosomal subunit protein bL32 from Shewanella halifaxensis (strain HAW-EB4).